Here is a 535-residue protein sequence, read N- to C-terminus: CTP synthase (535 aa).

The amidoligase domain stretch occupies residues 1-267 (MTKYIFVTGG…DKLVCEHMKL (267 aa)). Ser-13 provides a ligand contact to CTP. Residue Ser-13 coordinates UTP. 14–19 (SLGKGI) contacts ATP. Tyr-54 is an L-glutamine binding site. Asp-71 contacts ATP. Residues Asp-71 and Glu-141 each contribute to the Mg(2+) site. CTP-binding positions include 148-150 (DIE), 188-193 (KTKPTQ), and Lys-224. Residues 188 to 193 (KTKPTQ) and Lys-224 each bind UTP. The Glutamine amidotransferase type-1 domain maps to 292–534 (TIGLVGKYVE…VGASLQASES (243 aa)). Gly-354 is a binding site for L-glutamine. Cys-381 (nucleophile; for glutamine hydrolysis) is an active-site residue. L-glutamine contacts are provided by residues 382–385 (LGMQ), Glu-405, and Arg-462. Active-site residues include His-507 and Glu-509.

This sequence belongs to the CTP synthase family. As to quaternary structure, homotetramer.

It carries out the reaction UTP + L-glutamine + ATP + H2O = CTP + L-glutamate + ADP + phosphate + 2 H(+). The enzyme catalyses L-glutamine + H2O = L-glutamate + NH4(+). The catalysed reaction is UTP + NH4(+) + ATP = CTP + ADP + phosphate + 2 H(+). It functions in the pathway pyrimidine metabolism; CTP biosynthesis via de novo pathway; CTP from UDP: step 2/2. With respect to regulation, allosterically activated by GTP, when glutamine is the substrate; GTP has no effect on the reaction when ammonia is the substrate. The allosteric effector GTP functions by stabilizing the protein conformation that binds the tetrahedral intermediate(s) formed during glutamine hydrolysis. Inhibited by the product CTP, via allosteric rather than competitive inhibition. In terms of biological role, catalyzes the ATP-dependent amination of UTP to CTP with either L-glutamine or ammonia as the source of nitrogen. Regulates intracellular CTP levels through interactions with the four ribonucleotide triphosphates. This Bacillus pumilus (strain SAFR-032) protein is CTP synthase.